The chain runs to 68 residues: Glucagon-1 (68 aa).

Belongs to the glucagon family.

The protein resides in the secreted. Promotes hydrolysis of glycogen and lipids, and raises the blood sugar level. This chain is Glucagon-1 (gcg), found in Oncorhynchus kisutch (Coho salmon).